The chain runs to 547 residues: Chaperonin GroEL (547 aa).

Residues 30–33 (TLGP), Lys51, 87–91 (DGTTT), Gly415, 479–481 (NAA), and Asp495 contribute to the ATP site.

It belongs to the chaperonin (HSP60) family. As to quaternary structure, forms a cylinder of 14 subunits composed of two heptameric rings stacked back-to-back. Interacts with the co-chaperonin GroES.

The protein localises to the cytoplasm. The enzyme catalyses ATP + H2O + a folded polypeptide = ADP + phosphate + an unfolded polypeptide.. Functionally, together with its co-chaperonin GroES, plays an essential role in assisting protein folding. The GroEL-GroES system forms a nano-cage that allows encapsulation of the non-native substrate proteins and provides a physical environment optimized to promote and accelerate protein folding. This chain is Chaperonin GroEL, found in Enterobacter sp. (strain 638).